An 89-amino-acid chain; its full sequence is Small ribosomal subunit protein bS20 (89 aa).

This sequence belongs to the bacterial ribosomal protein bS20 family.

Its function is as follows. Binds directly to 16S ribosomal RNA. This is Small ribosomal subunit protein bS20 from Solidesulfovibrio magneticus (strain ATCC 700980 / DSM 13731 / RS-1) (Desulfovibrio magneticus).